Consider the following 380-residue polypeptide: Acyl-coenzyme A diphosphatase SCS3 (380 aa).

The Cytoplasmic portion of the chain corresponds to 1–7 (MSSKWFN). A helical membrane pass occupies residues 8-28 (AIHLLVCPLTVLVGYLMNAYG). Residues 29–43 (YGAALQATLNKDGLV) are Lumenal-facing. Residues 44–64 (NAMLVKKGWFWTSLVGWWCII) traverse the membrane as a helical segment. Residues 65-88 (RYRAVPGATGRDRRHIVQSFKRYA) lie on the Cytoplasmic side of the membrane. The chain crosses the membrane as a helical span at residues 89-109 (ILTVWWYVFTQGIWFGVGPIM). Residues 110–233 (DLVFVYTGGH…GHWAGGHDPS (124 aa)) are Lumenal-facing. Residues 234–254 (GHVFLATLMCMFLLGELRVFG) form a helical membrane-spanning segment. The active site involves His235. Over 255–325 (RRALAHLYAQ…LTRCIACDHP (71 aa)) the chain is Cytoplasmic. A helical transmembrane segment spans residues 326–346 (VIILLTLLVTWLWQLLLTAVA). Residues 347–356 (SRFHTVREHM) lie on the Lumenal side of the membrane. The active site involves His350. A helical transmembrane segment spans residues 357-377 (SGLLAAYIVTGLVYARDAAAL). Topologically, residues 378–380 (RPV) are cytoplasmic.

This sequence belongs to the FIT family. Fungal FIT2B/SCS3 subfamily.

The protein resides in the endoplasmic reticulum membrane. It carries out the reaction an acyl-CoA + H2O = an acyl-4'-phosphopantetheine + adenosine 3',5'-bisphosphate + 2 H(+). It catalyses the reaction (9Z)-octadecenoyl-CoA + H2O = S-(9Z-octadecenoyl)-4'-phosphopantetheine + adenosine 3',5'-bisphosphate + 2 H(+). The enzyme catalyses (5Z,8Z,11Z,14Z)-eicosatetraenoyl-CoA + H2O = S-(5Z,8Z,11Z,14Z-eicosatetraenoyl)-4'-phosphopantetheine + adenosine 3',5'-bisphosphate + 2 H(+). The catalysed reaction is hexadecanoyl-CoA + H2O = S-hexadecanoyl-4'-phosphopantetheine + adenosine 3',5'-bisphosphate + 2 H(+). Fatty acyl-coenzyme A (CoA) diphosphatase that hydrolyzes fatty acyl-CoA to yield acyl-4'-phosphopantetheine and adenosine 3',5'-bisphosphate. Preferentially hydrolyzes unsaturated long-chain acyl-CoA substrates in the endoplasmic reticulum (ER) lumen. This catalytic activity is required for maintaining ER structure and for lipid droplets (LDs) biogenesis, which are lipid storage organelles involved in maintaining lipid and energy homeostasis. May directly bind to diacylglycerol (DAGs) and triacylglycerol, which is also important for LD biogenesis. May support directional budding of nacent LDs from the ER into the cytosol by reducing DAG levels at sites of LD formation. May play a role in the regulation of cell morphology and cytoskeletal organization. Involved in phospholipid biosynthesis. The chain is Acyl-coenzyme A diphosphatase SCS3 from Saccharomyces cerevisiae (strain ATCC 204508 / S288c) (Baker's yeast).